The primary structure comprises 444 residues: Argininosuccinate synthase (444 aa).

Residues 18 to 26 (AFSGGLDTS) and Ala44 each bind ATP. An L-citrulline-binding site is contributed by Tyr100. Positions 130 and 132 each coordinate ATP. Thr132, Asn136, and Asp137 together coordinate L-aspartate. An L-citrulline-binding site is contributed by Asn136. An ATP-binding site is contributed by Asp137. 2 residues coordinate L-citrulline: Arg140 and Ser193. Residue Asp195 coordinates ATP. L-citrulline is bound by residues Thr202, Glu204, and Glu281.

The protein belongs to the argininosuccinate synthase family. Type 2 subfamily. In terms of assembly, homotetramer.

The protein localises to the cytoplasm. It carries out the reaction L-citrulline + L-aspartate + ATP = 2-(N(omega)-L-arginino)succinate + AMP + diphosphate + H(+). It functions in the pathway amino-acid biosynthesis; L-arginine biosynthesis; L-arginine from L-ornithine and carbamoyl phosphate: step 2/3. This Histophilus somni (strain 129Pt) (Haemophilus somnus) protein is Argininosuccinate synthase.